The chain runs to 361 residues: Putative F-box protein At3g25460 (361 aa).

The region spanning 1 to 45 is the F-box domain; that stretch reads MMMPELPEDLLVEILCRVPATSLKRLRSTCKLWNHLYNDKRFKSK.

This is Putative F-box protein At3g25460 from Arabidopsis thaliana (Mouse-ear cress).